The chain runs to 343 residues: Holliday junction branch migration complex subunit RuvB (343 aa).

The tract at residues 4 to 193 (TDNLTAAQPQ…FGIVSRLEFY (190 aa)) is large ATPase domain (RuvB-L). Residues Leu32, Arg33, Gly74, Lys77, Thr78, Thr79, 140–142 (EDY), Arg183, Tyr193, and Arg230 contribute to the ATP site. Mg(2+) is bound at residue Thr78. The small ATPAse domain (RuvB-S) stretch occupies residues 194 to 264 (ENRDLTTIVS…VADAALSMLD (71 aa)). The interval 267-343 (AQGLDVMDRK…YLHFGLPVEK (77 aa)) is head domain (RuvB-H). Residues Arg322 and Arg327 each coordinate DNA.

The protein belongs to the RuvB family. Homohexamer. Forms an RuvA(8)-RuvB(12)-Holliday junction (HJ) complex. HJ DNA is sandwiched between 2 RuvA tetramers; dsDNA enters through RuvA and exits via RuvB. An RuvB hexamer assembles on each DNA strand where it exits the tetramer. Each RuvB hexamer is contacted by two RuvA subunits (via domain III) on 2 adjacent RuvB subunits; this complex drives branch migration. In the full resolvosome a probable DNA-RuvA(4)-RuvB(12)-RuvC(2) complex forms which resolves the HJ.

The protein localises to the cytoplasm. The enzyme catalyses ATP + H2O = ADP + phosphate + H(+). Its function is as follows. The RuvA-RuvB-RuvC complex processes Holliday junction (HJ) DNA during genetic recombination and DNA repair, while the RuvA-RuvB complex plays an important role in the rescue of blocked DNA replication forks via replication fork reversal (RFR). RuvA specifically binds to HJ cruciform DNA, conferring on it an open structure. The RuvB hexamer acts as an ATP-dependent pump, pulling dsDNA into and through the RuvAB complex. RuvB forms 2 homohexamers on either side of HJ DNA bound by 1 or 2 RuvA tetramers; 4 subunits per hexamer contact DNA at a time. Coordinated motions by a converter formed by DNA-disengaged RuvB subunits stimulates ATP hydrolysis and nucleotide exchange. Immobilization of the converter enables RuvB to convert the ATP-contained energy into a lever motion, pulling 2 nucleotides of DNA out of the RuvA tetramer per ATP hydrolyzed, thus driving DNA branch migration. The RuvB motors rotate together with the DNA substrate, which together with the progressing nucleotide cycle form the mechanistic basis for DNA recombination by continuous HJ branch migration. Branch migration allows RuvC to scan DNA until it finds its consensus sequence, where it cleaves and resolves cruciform DNA. In Neisseria gonorrhoeae (strain NCCP11945), this protein is Holliday junction branch migration complex subunit RuvB.